A 405-amino-acid polypeptide reads, in one-letter code: uncharacterized protein (405 aa).

Transmembrane regions (helical) follow at residues 19 to 39 (ILSIVMFNFASYLTIGLPLAV), 47 to 67 (VMGFSAFWAGLVISLQYFATL), 85 to 105 (IVVFGLCGCFLSGLGYLTAGL), 129 to 149 (SFAGTGSTLWGVGVVGSLHIG), 157 to 177 (IVTYGAMAMGAPLGVVFYHWG), 178 to 198 (GLQALALIIMGVALVAILLAI), 224 to 244 (GMALALASAGFGVIATFITLF), 252 to 272 (GAAFALTLFSCAFVGTRLLFP), 283 to 303 (VAMICFSVEIIGLLLVGVATM), 309 to 329 (IGVLLAGAGFSLVFPALGVVA), 344 to 364 (TYTVFMDLSLGVTGPLAGLVM), and 366 to 386 (WAGVPVIYLAAAGLVAIALLL).

The protein belongs to the major facilitator superfamily. YhhS family.

Its subcellular location is the cell inner membrane. This is an uncharacterized protein from Escherichia coli O157:H7.